The following is a 417-amino-acid chain: Carboxypeptidase A2 (417 aa).

The N-terminal stretch at 1–16 (MRLTPLLVALFGYIYC) is a signal peptide. Positions 17–112 (QETFVGDQVL…EMLFNQQRER (96 aa)) are cleaved as a propeptide — activation peptide. The Peptidase M14 domain maps to 120-412 (AYHTLEEIYQ…LGLKTIMEHV (293 aa)). Histidine 177 and glutamate 180 together coordinate Zn(2+). Substrate-binding positions include 177–180 (HARE), arginine 235, and 252–253 (NR). A disulfide bridge links cysteine 246 with cysteine 269. Position 304 (histidine 304) interacts with Zn(2+). 305–306 (SY) provides a ligand contact to substrate. An intrachain disulfide couples cysteine 318 to cysteine 352. Tyrosine 356 is a binding site for substrate. Glutamate 378 acts as the Proton donor/acceptor in catalysis.

The protein belongs to the peptidase M14 family. The cofactor is Zn(2+).

The protein localises to the secreted. It catalyses the reaction Similar to that of carboxypeptidase A (EC 3.4.17.1), but with a preference for bulkier C-terminal residues.. Carboxypeptidase that catalyzes the release of a C-terminal amino acid, with a preference for large aromatic C-terminal residues. In Mus musculus (Mouse), this protein is Carboxypeptidase A2 (Cpa2).